Consider the following 141-residue polypeptide: Pancreatic progenitor cell differentiation and proliferation factor-like protein (141 aa).

Positions 72–141 are disordered; it reads DQSACGGNGP…GAPKDTNSPQ (70 aa). The span at 95–105 shows a compositional bias: low complexity; sequence SLLQQEESQLL. Residues 112–122 show a composition bias toward polar residues; it reads GTVNRFRNSQT.

The protein belongs to the PPDPF family.

In Bos taurus (Bovine), this protein is Pancreatic progenitor cell differentiation and proliferation factor-like protein.